We begin with the raw amino-acid sequence, 394 residues long: Subtilisin-like protease 4 (394 aa).

Positions Cys1–Ala17 are cleaved as a signal peptide. A propeptide spanning residues Arg18 to Ser116 is cleaved from the precursor. Residues Tyr36–Ile115 form the Inhibitor I9 domain. Asn100 is a glycosylation site (N-linked (GlcNAc...) asparagine). One can recognise a Peptidase S8 domain in the interval Ser126 to Gly394. Residues Asp158 and His189 each act as charge relay system in the active site. N-linked (GlcNAc...) asparagine glycosylation is found at Asn250 and Asn306. Catalysis depends on Ser344, which acts as the Charge relay system.

Belongs to the peptidase S8 family.

The protein resides in the secreted. In terms of biological role, secreted subtilisin-like serine protease with keratinolytic activity that contributes to pathogenicity. The protein is Subtilisin-like protease 4 (SUB4) of Trichophyton equinum (Horse ringworm fungus).